A 293-amino-acid chain; its full sequence is 4-diphosphocytidyl-2-C-methyl-D-erythritol kinase (293 aa).

The active site involves Lys-16. Pro-99–Ser-109 provides a ligand contact to ATP. The active site involves Asp-141.

It belongs to the GHMP kinase family. IspE subfamily.

The catalysed reaction is 4-CDP-2-C-methyl-D-erythritol + ATP = 4-CDP-2-C-methyl-D-erythritol 2-phosphate + ADP + H(+). The protein operates within isoprenoid biosynthesis; isopentenyl diphosphate biosynthesis via DXP pathway; isopentenyl diphosphate from 1-deoxy-D-xylulose 5-phosphate: step 3/6. In terms of biological role, catalyzes the phosphorylation of the position 2 hydroxy group of 4-diphosphocytidyl-2C-methyl-D-erythritol. This chain is 4-diphosphocytidyl-2-C-methyl-D-erythritol kinase, found in Burkholderia cenocepacia (strain HI2424).